The following is a 169-amino-acid chain: S-ribosylhomocysteine lyase (169 aa).

His54, His58, and Cys128 together coordinate Fe cation.

The protein belongs to the LuxS family. In terms of assembly, homodimer. Fe cation serves as cofactor.

It catalyses the reaction S-(5-deoxy-D-ribos-5-yl)-L-homocysteine = (S)-4,5-dihydroxypentane-2,3-dione + L-homocysteine. Its function is as follows. Involved in the synthesis of autoinducer 2 (AI-2) which is secreted by bacteria and is used to communicate both the cell density and the metabolic potential of the environment. The regulation of gene expression in response to changes in cell density is called quorum sensing. Catalyzes the transformation of S-ribosylhomocysteine (RHC) to homocysteine (HC) and 4,5-dihydroxy-2,3-pentadione (DPD). The polypeptide is S-ribosylhomocysteine lyase (Shewanella woodyi (strain ATCC 51908 / MS32)).